Reading from the N-terminus, the 895-residue chain is uncharacterized protein (895 aa).

A disordered region spans residues 257-283 (KSHKYPPGPPDNSSSNTSGQQNTSNTS). Positions 268–283 (NSSSNTSGQQNTSNTS) are enriched in low complexity.

This is an uncharacterized protein from Acanthamoeba polyphaga mimivirus (APMV).